A 482-amino-acid chain; its full sequence is Methylenetetrahydrofolate--tRNA-(uracil-5-)-methyltransferase TrmFO (482 aa).

11–16 (GAGLAG) contacts FAD.

Belongs to the MnmG family. TrmFO subfamily. FAD is required as a cofactor.

It localises to the cytoplasm. It carries out the reaction uridine(54) in tRNA + (6R)-5,10-methylene-5,6,7,8-tetrahydrofolate + NADH + H(+) = 5-methyluridine(54) in tRNA + (6S)-5,6,7,8-tetrahydrofolate + NAD(+). It catalyses the reaction uridine(54) in tRNA + (6R)-5,10-methylene-5,6,7,8-tetrahydrofolate + NADPH + H(+) = 5-methyluridine(54) in tRNA + (6S)-5,6,7,8-tetrahydrofolate + NADP(+). Catalyzes the folate-dependent formation of 5-methyl-uridine at position 54 (M-5-U54) in all tRNAs. This Nitratidesulfovibrio vulgaris (strain DP4) (Desulfovibrio vulgaris) protein is Methylenetetrahydrofolate--tRNA-(uracil-5-)-methyltransferase TrmFO.